Here is an 87-residue protein sequence, read N- to C-terminus: Putative regulatory protein GK1166 (87 aa).

Belongs to the RemA family.

In Geobacillus kaustophilus (strain HTA426), this protein is Putative regulatory protein GK1166.